A 232-amino-acid polypeptide reads, in one-letter code: MVDIVVTGLSANSVPYIEALERQRALHADVVAGRAQDTVILLEHPSVYTAGRRTEPDDRPRDGTPVIDVDRGGRITWHGPGQLVGYPIVRLPEPLDVVAHVRRLEDALIALLAELGIASCRVDGRSGVWIRGTAPDGTPRDEKVAAIGVRVAERVTMHGFALNCSNALDAYDRIVPCGIRDAGVTSLSRVLGRTVTPADVVPLLRPHLVRALSNGSAMPATPALPSAAGARA.

Positions Gly33–Ser216 constitute a BPL/LPL catalytic domain. Substrate is bound by residues Arg71–His78, Ala146–Gly148, and Gly159–Ala161. The active-site Acyl-thioester intermediate is the Cys177.

The protein belongs to the LipB family.

The protein resides in the cytoplasm. It catalyses the reaction octanoyl-[ACP] + L-lysyl-[protein] = N(6)-octanoyl-L-lysyl-[protein] + holo-[ACP] + H(+). The protein operates within protein modification; protein lipoylation via endogenous pathway; protein N(6)-(lipoyl)lysine from octanoyl-[acyl-carrier-protein]: step 1/2. In terms of biological role, catalyzes the transfer of endogenously produced octanoic acid from octanoyl-acyl-carrier-protein onto the lipoyl domains of lipoate-dependent enzymes. Lipoyl-ACP can also act as a substrate although octanoyl-ACP is likely to be the physiological substrate. This Clavibacter sepedonicus (Clavibacter michiganensis subsp. sepedonicus) protein is Octanoyltransferase.